A 354-amino-acid chain; its full sequence is Dihydroorotate dehydrogenase (quinone) (354 aa).

FMN-binding positions include 61 to 65 (AGYDK) and Ala85. A substrate-binding site is contributed by Lys65. 110–114 (NRFGF) lines the substrate pocket. Asn139 and Asn170 together coordinate FMN. Residue Asn170 participates in substrate binding. Ser173 functions as the Nucleophile in the catalytic mechanism. A substrate-binding site is contributed by Asn175. Lys211 and Thr239 together coordinate FMN. 240–241 (NT) contacts substrate. Residues Gly261, Gly290, and 311 to 312 (YT) each bind FMN.

The protein belongs to the dihydroorotate dehydrogenase family. Type 2 subfamily. In terms of assembly, monomer. FMN is required as a cofactor.

It is found in the cell membrane. The enzyme catalyses (S)-dihydroorotate + a quinone = orotate + a quinol. The protein operates within pyrimidine metabolism; UMP biosynthesis via de novo pathway; orotate from (S)-dihydroorotate (quinone route): step 1/1. Functionally, catalyzes the conversion of dihydroorotate to orotate with quinone as electron acceptor. The protein is Dihydroorotate dehydrogenase (quinone) of Cereibacter sphaeroides (strain ATCC 17023 / DSM 158 / JCM 6121 / CCUG 31486 / LMG 2827 / NBRC 12203 / NCIMB 8253 / ATH 2.4.1.) (Rhodobacter sphaeroides).